Reading from the N-terminus, the 384-residue chain is Ceramide very long chain fatty acid hydroxylase SCS7 (384 aa).

Residues 1 to 197 lie on the Cytoplasmic side of the membrane; that stretch reads MSTNTSKTLE…NFLEPLTKTA (197 aa). The 82-residue stretch at 9–90 folds into the Cytochrome b5 heme-binding domain; that stretch reads LELFSKKTVQ…EDEYLIGYLA (82 aa). Residues H45 and H72 each coordinate heme. Residues 198–216 traverse the membrane as a helical segment; that stretch reads WWVVPVAWLPVVVYHMGVA. Residues 217-221 lie on the Lumenal side of the membrane; sequence LKNMN. Residues 222–246 form a helical membrane-spanning segment; it reads QLFACFLFCVGVFVWTLIEYGLHRF. Zn(2+) contacts are provided by H244, H249, H268, H271, and H272. Residues 247-284 are Cytoplasmic-facing; the sequence is LFHFDDWLPESNIAFATHFLLHGCHHYLPMDKYRLVMP. The helical transmembrane segment at 285–302 threads the bilayer; it reads PTLFVILCAPFYKLVFAL. The Lumenal portion of the chain corresponds to 303–304; sequence LP. A helical membrane pass occupies residues 305 to 328; that stretch reads LYWAYAGFAGGLFGYVCYDECHFF. The Zn(2+) site is built by H326, H330, H345, H348, and H349. Over 329–384 the chain is Cytoplasmic; the sequence is LHHSKLPPFMRKLKKYHLEHHYKNYQLGFGVTSWFWDEVFGTYLGPDAPLSKMKYE.

Belongs to the sterol desaturase family. SCS7 subfamily. Requires Zn(2+) as cofactor.

It localises to the endoplasmic reticulum membrane. It catalyses the reaction an N-(1,2 saturated acyl)-(4R)-hydroxysphinganine + 2 Fe(II)-[cytochrome b5] + O2 + 2 H(+) = an N-(2R-hydroxyacyl)-4R-hydroxysphinganine + 2 Fe(III)-[cytochrome b5] + H2O. The catalysed reaction is an N-(1,2-saturated acyl)sphinganine + 2 Fe(II)-[cytochrome b5] + O2 + 2 H(+) = an N-[(2'R)-hydroxyacyl]sphinganine + 2 Fe(III)-[cytochrome b5] + H2O. The enzyme catalyses N-hexacosanoyl-(4R)-hydroxysphinganine + 2 Fe(II)-[cytochrome b5] + O2 + 2 H(+) = N-(2-hydroxyhexacosanyl)-(4R)-hydroxysphinganine + 2 Fe(III)-[cytochrome b5] + H2O. Its pathway is sphingolipid metabolism. In terms of biological role, ceramide hydroxylase involved in the hydroxylation of sphingolipid-associated very long chain fatty acids. Postulated to hydroxylate the very long chain fatty acid of dihydroceramides and phytoceramides at C-2. In Saccharomyces cerevisiae (strain ATCC 204508 / S288c) (Baker's yeast), this protein is Ceramide very long chain fatty acid hydroxylase SCS7.